The sequence spans 235 residues: tRNA (guanine-N(1)-)-methyltransferase (235 aa).

Residues Gly-112 and Ile-132–Ile-137 each bind S-adenosyl-L-methionine.

Belongs to the RNA methyltransferase TrmD family. As to quaternary structure, homodimer.

Its subcellular location is the cytoplasm. The enzyme catalyses guanosine(37) in tRNA + S-adenosyl-L-methionine = N(1)-methylguanosine(37) in tRNA + S-adenosyl-L-homocysteine + H(+). Its function is as follows. Specifically methylates guanosine-37 in various tRNAs. The protein is tRNA (guanine-N(1)-)-methyltransferase of Anaplasma marginale (strain St. Maries).